The sequence spans 173 residues: Mesencephalic astrocyte-derived neurotrophic factor homolog (173 aa).

The N-terminal stretch at 1 to 22 is a signal peptide; it reads MKTWYMVVVIGFLATLAQTSLA. Disulfide bonds link Cys28/Cys114, Cys31/Cys103, Cys61/Cys72, and Cys148/Cys151.

It belongs to the ARMET family.

The protein resides in the secreted. In terms of biological role, required during the maturation of the embryonic nervous system for maintenance of neuronal and cuticular connectivity. Essential for maintenance of dopaminergic neurons and dopamine levels. This Drosophila erecta (Fruit fly) protein is Mesencephalic astrocyte-derived neurotrophic factor homolog.